We begin with the raw amino-acid sequence, 105 residues long: Synaptic plasticity regulator PANTS (105 aa).

The protein belongs to the UPF0545 family. As to quaternary structure, interacts with RTN4 isoform A/Nogo-A; the interaction results in enhanced RTN4-mediated inhibition of AMPA receptor clustering. Also interacts with NCAM1, RANBP2 and CCT8. In terms of processing, rapidly degraded by proteolysis following neuronal stimulation, resulting in increased AMPA receptor clustering.

It localises to the synapse. Its subcellular location is the synaptic cleft. Its function is as follows. Negatively regulates long-term potentiation and modulates adult synaptic plasticity. Stabilizes the interaction of RTN4 isoform A/Nogo-A with its receptors, inhibiting clustering of postsynaptic AMPA receptors at synaptic sites. Upon neuronal stimulation, degraded at synapses, reducing RTN4 signaling and allowing AMPA receptor clustering at individual synapses. The sequence is that of Synaptic plasticity regulator PANTS from Pongo abelii (Sumatran orangutan).